Here is a 259-residue protein sequence, read N- to C-terminus: Glutamate racemase (259 aa).

Substrate-binding positions include 9–10 (DS) and 41–42 (YG). The active-site Proton donor/acceptor is the Cys73. Substrate is bound at residue 74 to 75 (NT). The active-site Proton donor/acceptor is the Cys183. A substrate-binding site is contributed by 184-185 (TH).

Belongs to the aspartate/glutamate racemases family.

It carries out the reaction L-glutamate = D-glutamate. It functions in the pathway cell wall biogenesis; peptidoglycan biosynthesis. In terms of biological role, provides the (R)-glutamate required for cell wall biosynthesis. In Shewanella frigidimarina (strain NCIMB 400), this protein is Glutamate racemase.